Here is a 1474-residue protein sequence, read N- to C-terminus: Adhesion G protein-coupled receptor L1 (1474 aa).

The first 24 residues, 1–24 (MARLAAVLWNLCVTAVLVTSATQG), serve as a signal peptide directing secretion. Over 25–858 (LSRAGLPFGL…EIYQGRINEL (834 aa)) the chain is Extracellular. Positions 40-129 (ACEGYPIELR…KYLEVQYDCV (90 aa)) constitute an SUEL-type lectin domain. Disulfide bonds link cysteine 41/cysteine 71, cysteine 50/cysteine 128, cysteine 83/cysteine 115, cysteine 96/cysteine 102, and cysteine 140/cysteine 322. Glutamate 42 serves as a coordination point for alpha-L-rhamnose. The N-linked (GlcNAc...) asparagine glycan is linked to asparagine 98. 117-120 (GTYK) is an alpha-L-rhamnose binding site. The 260-residue stretch at 139-398 (VCPGTLQKVL…VVRYSLEFGP (260 aa)) folds into the Olfactomedin-like domain. The interval 400–434 (DPSAGPATSPPLSTTTTARPTPLTSTASPAATTPL) is disordered. Residues 405 to 434 (PATSPPLSTTTTARPTPLTSTASPAATTPL) are compositionally biased toward low complexity. Disulfide bonds link cysteine 480/cysteine 515 and cysteine 503/cysteine 532. 6 N-linked (GlcNAc...) asparagine glycosylation sites follow: asparagine 531, asparagine 640, asparagine 742, asparagine 801, asparagine 806, and asparagine 827. Residues 669 to 851 (PARFLAAKEN…AVLMAHREIY (183 aa)) form the GAIN-B domain. Intrachain disulfides connect cysteine 802-cysteine 833 and cysteine 821-cysteine 835. The GPS stretch occupies residues 802-851 (CSFWNYSERSMLGYWSTQGCRLVESNKTHTTCACSHLTNFAVLMAHREIY). The chain crosses the membrane as a helical span at residues 859-879 (LLSVITWVGIVISLVCLAICI). The Cytoplasmic segment spans residues 880–893 (STFCFLRGLQTDRN). The helical transmembrane segment at 894 to 914 (TIHKNLCINLFLAELLFLVGI) threads the bilayer. Topologically, residues 915-920 (DKTQYE) are extracellular. The chain crosses the membrane as a helical span at residues 921 to 941 (IACPIFAGLLHYFFLAAFSWL). Topologically, residues 942–964 (CLEGVHLYLLLVEVFESEYSRTK) are cytoplasmic. A helical membrane pass occupies residues 965–985 (YYYLGGYCFPALVVGIAAAID). The Extracellular portion of the chain corresponds to 986 to 1002 (YRSYGTEKACWLRVDNY). Residues 1003 to 1023 (FIWSFIGPVSFVIVVNLVFLM) traverse the membrane as a helical segment. The Cytoplasmic portion of the chain corresponds to 1024 to 1050 (VTLHKMIRSSSVLKPDSSRLDNIKSWA). The helical transmembrane segment at 1051–1071 (LGAIALLFLLGLTWAFGLLFI) threads the bilayer. Residues 1072–1075 (NKES) lie on the Extracellular side of the membrane. A helical transmembrane segment spans residues 1076-1096 (VVMAYLFTTFNAFQGVFIFVF). Topologically, residues 1097–1474 (HCALQKKVHK…DGQMQLVTSL (378 aa)) are cytoplasmic. Residue arginine 1194 is modified to Omega-N-methylarginine. A Phosphoserine modification is found at serine 1220. 4 disordered regions span residues 1248-1273 (FNNS…RGRN), 1294-1328 (RGSS…PGGA), 1360-1429 (ESES…SRPP), and 1451-1474 (YLAA…VTSL). Pro residues-rich tracts occupy residues 1302–1314 (GPPP…PPVP) and 1408–1420 (ALPP…PGPP). A Phosphoserine modification is found at serine 1473.

Belongs to the G-protein coupled receptor 2 family. Adhesion G-protein coupled receptor (ADGR) subfamily. Forms a heterodimer, consisting of a large extracellular region (p120) non-covalently linked to a seven-transmembrane moiety (p85). Interacts with syntaxin and with proteins of the SHANK family via the PDZ domain. Interacts (via extracellular domain) with FLRT1, FLRT2 and FLRT3 (via extracellular domain). Post-translationally, autoproteolytically cleaved into 2 subunits, an extracellular subunit and a seven-transmembrane subunit. This proteolytic processing takes place early in the biosynthetic pathway, either in the endoplasmic reticulum or in the early compartment of the Golgi apparatus.

It localises to the cell membrane. The protein resides in the cell projection. It is found in the axon. Its subcellular location is the growth cone. The protein localises to the synapse. It localises to the presynaptic cell membrane. The protein resides in the synaptosome. Functionally, calcium-independent receptor of high affinity for alpha-latrotoxin, an excitatory neurotoxin present in black widow spider venom which triggers massive exocytosis from neurons and neuroendocrine cells. Receptor for TENM2 that mediates heterophilic synaptic cell-cell contact and postsynaptic specialization. Receptor probably implicated in the regulation of exocytosis. The protein is Adhesion G protein-coupled receptor L1 of Homo sapiens (Human).